Consider the following 54-residue polypeptide: ATP synthase F(0) complex subunit 8 (54 aa).

A helical membrane pass occupies residues 9–29 (WFMILFFSWVIFLTIIPTKII). Positions 35 to 54 (NDPTQVDAKEHKNDTWNWPW) are disordered.

Belongs to the ATPase protein 8 family. As to quaternary structure, component of the ATP synthase complex composed at least of ATP5F1A/subunit alpha, ATP5F1B/subunit beta, ATP5MC1/subunit c (homooctomer), MT-ATP6/subunit a, MT-ATP8/subunit 8, ATP5ME/subunit e, ATP5MF/subunit f, ATP5MG/subunit g, ATP5MK/subunit k, ATP5MJ/subunit j, ATP5F1C/subunit gamma, ATP5F1D/subunit delta, ATP5F1E/subunit epsilon, ATP5PF/subunit F6, ATP5PB/subunit b, ATP5PD/subunit d, ATP5PO/subunit OSCP. ATP synthase complex consists of a soluble F(1) head domain (subunits alpha(3) and beta(3)) - the catalytic core - and a membrane F(0) domain - the membrane proton channel (subunits c, a, 8, e, f, g, k and j). These two domains are linked by a central stalk (subunits gamma, delta, and epsilon) rotating inside the F1 region and a stationary peripheral stalk (subunits F6, b, d, and OSCP).

Its subcellular location is the mitochondrion membrane. Subunit 8, of the mitochondrial membrane ATP synthase complex (F(1)F(0) ATP synthase or Complex V) that produces ATP from ADP in the presence of a proton gradient across the membrane which is generated by electron transport complexes of the respiratory chain. ATP synthase complex consist of a soluble F(1) head domain - the catalytic core - and a membrane F(1) domain - the membrane proton channel. These two domains are linked by a central stalk rotating inside the F(1) region and a stationary peripheral stalk. During catalysis, ATP synthesis in the catalytic domain of F(1) is coupled via a rotary mechanism of the central stalk subunits to proton translocation. In vivo, can only synthesize ATP although its ATP hydrolase activity can be activated artificially in vitro. Part of the complex F(0) domain. The polypeptide is ATP synthase F(0) complex subunit 8 (Danio rerio (Zebrafish)).